We begin with the raw amino-acid sequence, 577 residues long: Acyl-coenzyme A synthetase ACSM2A, mitochondrial (577 aa).

The N-terminal 46 residues, 1–46 (MHWLRKVQGLCTLWGTQMSSRTLYINSRQLVSLQWGHQEVPAKFNF), are a transit peptide targeting the mitochondrion. Gln-139 is a binding site for CoA. ATP-binding positions include 221–229 (TSGTSGLPK), 359–364 (ESYGQT), Asp-446, and Arg-461. Position 364 (Thr-364) interacts with substrate. 469–471 (SGY) is a binding site for CoA. Arg-472 contributes to the substrate binding site. Residue Arg-501 coordinates CoA. Position 513 is a phosphoserine (Ser-513). Residues Lys-532 and 540–542 (YPR) each bind CoA. Lys-557 is an ATP binding site.

The protein belongs to the ATP-dependent AMP-binding enzyme family. Monomer. Mg(2+) is required as a cofactor. Mn(2+) serves as cofactor.

The protein resides in the mitochondrion. It carries out the reaction a medium-chain fatty acid + ATP + CoA = a medium-chain fatty acyl-CoA + AMP + diphosphate. The enzyme catalyses benzoate + ATP + CoA = benzoyl-CoA + AMP + diphosphate. It catalyses the reaction hexanoate + ATP + CoA = hexanoyl-CoA + AMP + diphosphate. The catalysed reaction is butanoate + ATP + CoA = butanoyl-CoA + AMP + diphosphate. It carries out the reaction octanoate + ATP + CoA = octanoyl-CoA + AMP + diphosphate. The enzyme catalyses decanoate + ATP + CoA = decanoyl-CoA + AMP + diphosphate. In terms of biological role, catalyzes the activation of fatty acids by CoA to produce an acyl-CoA, the first step in fatty acid metabolism. Capable of activating medium-chain fatty acids (e.g. butyric (C4) to decanoic (C10) acids), and certain carboxylate-containing xenobiotics, e.g. benzoate. The chain is Acyl-coenzyme A synthetase ACSM2A, mitochondrial (ACSM2A) from Homo sapiens (Human).